Consider the following 150-residue polypeptide: Large ribosomal subunit protein bL9 (150 aa).

It belongs to the bacterial ribosomal protein bL9 family.

Binds to the 23S rRNA. The sequence is that of Large ribosomal subunit protein bL9 from Polaromonas sp. (strain JS666 / ATCC BAA-500).